A 281-amino-acid chain; its full sequence is 4-deoxy-L-threo-5-hexosulose-uronate ketol-isomerase (281 aa).

Zn(2+) contacts are provided by His-198, His-200, Glu-205, and His-248.

This sequence belongs to the KduI family. It depends on Zn(2+) as a cofactor.

It catalyses the reaction 5-dehydro-4-deoxy-D-glucuronate = 3-deoxy-D-glycero-2,5-hexodiulosonate. It functions in the pathway glycan metabolism; pectin degradation; 2-dehydro-3-deoxy-D-gluconate from pectin: step 4/5. Catalyzes the isomerization of 5-dehydro-4-deoxy-D-glucuronate to 3-deoxy-D-glycero-2,5-hexodiulosonate. In Lacticaseibacillus casei (strain BL23) (Lactobacillus casei), this protein is 4-deoxy-L-threo-5-hexosulose-uronate ketol-isomerase.